The chain runs to 140 residues: Lipoprotein MlpD (140 aa).

The first 17 residues, M1–G17, serve as a signal peptide directing secretion. The N-palmitoyl cysteine moiety is linked to residue C18. C18 carries the S-diacylglycerol cysteine lipid modification. Residues D22–L53 are disordered. Residues K33–L53 show a composition bias toward basic and acidic residues.

The protein belongs to the Multicopy lipoprotein (Mlp) family.

It localises to the cell outer membrane. An outer membrane protein that may participate in pathogenesis. Some human Lyme disease patients have antibodies against this protein. The Mlp proteins probably undergo intragenic recombination, generating new alleles. This Borreliella burgdorferi (strain ATCC 35210 / DSM 4680 / CIP 102532 / B31) (Borrelia burgdorferi) protein is Lipoprotein MlpD.